A 107-amino-acid chain; its full sequence is Nucleoid-associated protein amb4104 (107 aa).

It belongs to the YbaB/EbfC family. In terms of assembly, homodimer.

It localises to the cytoplasm. The protein resides in the nucleoid. Functionally, binds to DNA and alters its conformation. May be involved in regulation of gene expression, nucleoid organization and DNA protection. The sequence is that of Nucleoid-associated protein amb4104 from Paramagnetospirillum magneticum (strain ATCC 700264 / AMB-1) (Magnetospirillum magneticum).